The chain runs to 277 residues: MTMQPLIKLYDGRLMPQLGLGVWQASIQETELAVSKALEVGYRSIDTAAIYKNEEGVGKALKAAAVARDELFITTKLWNDDQHNPQQALETSLQKLQLDYVDLYLIHWPDPKQDHYVSAWRELVTLKEQGLIRSIGVCNFHIPHLQRLIDETGIAPTVNQIELHPLLQQRQLHAWNATHHIATESWSPLAQGGKGVFDQEIIRKLAQQYNKTPAQIVIRWHLDSGLIVIPKSVTPARIRENFEVFDFKLQKEELLAITKLDCGKRLGPDPEVFGSDR.

The active-site Proton donor is the Tyr-51. His-107 is a substrate binding site. Residue 187 to 241 (SPLAQGGKGVFDQEIIRKLAQQYNKTPAQIVIRWHLDSGLIVIPKSVTPARIREN) participates in NADP(+) binding.

The protein belongs to the aldo/keto reductase family. Monomer.

It is found in the cytoplasm. The catalysed reaction is hydroxyacetone + NADP(+) = methylglyoxal + NADPH + H(+). Functionally, aldo-keto reductase that significantly contributes to cellular methylglyoxal detoxification by catalyzing the NADPH-dependent conversion of methylglyoxal to acetol. The protein is Methylglyoxal reductase DkgA of Yersinia pestis.